The following is a 231-amino-acid chain: 2-C-methyl-D-erythritol 4-phosphate cytidylyltransferase (231 aa).

It belongs to the IspD/TarI cytidylyltransferase family. IspD subfamily.

It carries out the reaction 2-C-methyl-D-erythritol 4-phosphate + CTP + H(+) = 4-CDP-2-C-methyl-D-erythritol + diphosphate. The protein operates within isoprenoid biosynthesis; isopentenyl diphosphate biosynthesis via DXP pathway; isopentenyl diphosphate from 1-deoxy-D-xylulose 5-phosphate: step 2/6. In terms of biological role, catalyzes the formation of 4-diphosphocytidyl-2-C-methyl-D-erythritol from CTP and 2-C-methyl-D-erythritol 4-phosphate (MEP). The chain is 2-C-methyl-D-erythritol 4-phosphate cytidylyltransferase from Shewanella piezotolerans (strain WP3 / JCM 13877).